The chain runs to 493 residues: Aspartyl/glutamyl-tRNA(Asn/Gln) amidotransferase subunit B (493 aa).

This sequence belongs to the GatB/GatE family. GatB subfamily. Heterotrimer of A, B and C subunits.

The enzyme catalyses L-glutamyl-tRNA(Gln) + L-glutamine + ATP + H2O = L-glutaminyl-tRNA(Gln) + L-glutamate + ADP + phosphate + H(+). It carries out the reaction L-aspartyl-tRNA(Asn) + L-glutamine + ATP + H2O = L-asparaginyl-tRNA(Asn) + L-glutamate + ADP + phosphate + 2 H(+). Functionally, allows the formation of correctly charged Asn-tRNA(Asn) or Gln-tRNA(Gln) through the transamidation of misacylated Asp-tRNA(Asn) or Glu-tRNA(Gln) in organisms which lack either or both of asparaginyl-tRNA or glutaminyl-tRNA synthetases. The reaction takes place in the presence of glutamine and ATP through an activated phospho-Asp-tRNA(Asn) or phospho-Glu-tRNA(Gln). This is Aspartyl/glutamyl-tRNA(Asn/Gln) amidotransferase subunit B from Aromatoleum aromaticum (strain DSM 19018 / LMG 30748 / EbN1) (Azoarcus sp. (strain EbN1)).